A 201-amino-acid chain; its full sequence is Small ribosomal subunit protein uS4c (201 aa).

The disordered stretch occupies residues 20–44 (GLTSKRPKAGSDLRNQSRSGKKSQY). Residues 89–152 (MRLDNILFRL…NSRTLVQNLL (64 aa)) enclose the S4 RNA-binding domain.

This sequence belongs to the universal ribosomal protein uS4 family. As to quaternary structure, part of the 30S ribosomal subunit. Contacts protein S5. The interaction surface between S4 and S5 is involved in control of translational fidelity.

The protein localises to the plastid. The protein resides in the chloroplast. Its function is as follows. One of the primary rRNA binding proteins, it binds directly to 16S rRNA where it nucleates assembly of the body of the 30S subunit. Functionally, with S5 and S12 plays an important role in translational accuracy. In Barbarea verna (Land cress), this protein is Small ribosomal subunit protein uS4c (rps4).